A 479-amino-acid polypeptide reads, in one-letter code: Sulfate adenylyltransferase subunit 1 (479 aa).

In terms of domain architecture, tr-type G spans 25-239 (KSLLRFLTCG…EVLETVDIQR (215 aa)). The tract at residues 34-41 (GSVDDGKS) is G1. GTP is bound at residue 34 to 41 (GSVDDGKS). A G2 region spans residues 92-96 (GITID). A G3 region spans residues 113–116 (DTPG). Residues 113–117 (DTPGH) and 168–171 (NKMD) contribute to the GTP site. Residues 168–171 (NKMD) are G4. The G5 stretch occupies residues 206-208 (SAL).

Belongs to the TRAFAC class translation factor GTPase superfamily. Classic translation factor GTPase family. CysN/NodQ subfamily. As to quaternary structure, heterodimer composed of CysD, the smaller subunit, and CysN.

It carries out the reaction sulfate + ATP + H(+) = adenosine 5'-phosphosulfate + diphosphate. It participates in sulfur metabolism; hydrogen sulfide biosynthesis; sulfite from sulfate: step 1/3. In terms of biological role, with CysD forms the ATP sulfurylase (ATPS) that catalyzes the adenylation of sulfate producing adenosine 5'-phosphosulfate (APS) and diphosphate, the first enzymatic step in sulfur assimilation pathway. APS synthesis involves the formation of a high-energy phosphoric-sulfuric acid anhydride bond driven by GTP hydrolysis by CysN coupled to ATP hydrolysis by CysD. This is Sulfate adenylyltransferase subunit 1 from Salmonella choleraesuis (strain SC-B67).